The primary structure comprises 128 residues: uncharacterized protein (128 aa).

4 helical membrane passes run 2–22 (LPFYFLSVATNAAIGFILTVL), 34–54 (FLYDATFSLVLALLSGIAAVC), 64–84 (LPVLGDLIPTLAGGTGCALFL), and 108–128 (LGLFSLAASILHLLFAPTLFL).

Its subcellular location is the cell membrane. This is an uncharacterized protein from Treponema pallidum (strain Nichols).